The following is a 430-amino-acid chain: tRNA(Ile)-lysidine synthase (430 aa).

Ser-21–Ser-26 is an ATP binding site.

This sequence belongs to the tRNA(Ile)-lysidine synthase family.

It is found in the cytoplasm. The catalysed reaction is cytidine(34) in tRNA(Ile2) + L-lysine + ATP = lysidine(34) in tRNA(Ile2) + AMP + diphosphate + H(+). Functionally, ligates lysine onto the cytidine present at position 34 of the AUA codon-specific tRNA(Ile) that contains the anticodon CAU, in an ATP-dependent manner. Cytidine is converted to lysidine, thus changing the amino acid specificity of the tRNA from methionine to isoleucine. This Salmonella agona (strain SL483) protein is tRNA(Ile)-lysidine synthase.